An 871-amino-acid chain; its full sequence is DNA mismatch repair protein MutS (871 aa).

620-627 contacts ATP; that stretch reads GPNMGGKS. The disordered stretch occupies residues 806–837; the sequence is HHGGLNEPKQATMELTPPPEAIPSHTEKRNPL.

It belongs to the DNA mismatch repair MutS family.

This protein is involved in the repair of mismatches in DNA. It is possible that it carries out the mismatch recognition step. This protein has a weak ATPase activity. The chain is DNA mismatch repair protein MutS from Idiomarina loihiensis (strain ATCC BAA-735 / DSM 15497 / L2-TR).